We begin with the raw amino-acid sequence, 173 residues long: Zinc finger A20 and AN1 domain-containing stress-associated protein 2 (173 aa).

The segment at 12–46 adopts an A20-type zinc-finger fold; that stretch reads PEGPKLCTNNCGFFGSAATMNMCSKCHKDMLFQQE. Zn(2+) is bound by residues Cys18, Cys22, Cys34, Cys37, Cys114, Cys117, Cys128, Cys130, Cys135, His138, His144, and Cys146. The AN1-type zinc finger occupies 108-154; it reads PKGPSRCTTCNKRVGLTGFKCRCGSLFCGTHRYADVHDCSFNYHAAA.

Its function is as follows. May be involved in environmental stress response. This Arabidopsis thaliana (Mouse-ear cress) protein is Zinc finger A20 and AN1 domain-containing stress-associated protein 2 (SAP2).